A 266-amino-acid polypeptide reads, in one-letter code: 14-3-3 protein homolog (266 aa).

Residues 154 to 177 (KQAADQAQESYQKATETAEGHSPA) are disordered. The span at 158–168 (DQAQESYQKAT) shows a compositional bias: polar residues.

The protein belongs to the 14-3-3 family.

The chain is 14-3-3 protein homolog from Neospora caninum (Coccidian parasite).